The primary structure comprises 824 residues: Acyl-homoserine lactone acylase QuiP (824 aa).

Residues 1-26 (MASPALRHFLPRFGAAAAAASFLSLA) form the signal peptide. Ser264 acts as the Nucleophile in catalysis.

This sequence belongs to the peptidase S45 family. Heterodimer of an alpha subunit and a beta subunit processed from the same precursor.

It localises to the periplasm. It catalyses the reaction an N-acyl-L-homoserine lactone + H2O = L-homoserine lactone + a carboxylate. Catalyzes the deacylation of acyl-homoserine lactone (AHL or acyl-HSL), releasing homoserine lactone (HSL) and the corresponding fatty acid. Possesses a specificity for the degradation of long-chain acyl-HSLs (side chains of seven or more carbons in length). This chain is Acyl-homoserine lactone acylase QuiP (quiP), found in Pseudomonas syringae pv. syringae (strain B728a).